An 80-amino-acid chain; its full sequence is Centromere protein X (80 aa).

Belongs to the CENP-X/MHF2 family. As to quaternary structure, heterodimer with CENPX, sometimes called MHF; this interaction stabilizes both partners. MHF heterodimers can assemble to form tetrameric structures. MHF also coassemble with CENPT-CENPW heterodimers at centromeres to form the tetrameric CENP-T-W-S-X complex. Forms a discrete complex with FANCM and CENPX, called FANCM-MHF; this interaction, probably mediated by direct binding between CENPS and FANCM, leads to synergistic activation of double-stranded DNA binding and strongly stimulates FANCM-mediated DNA remodeling. Recruited by FANCM to the Fanconi anemia (FA) core complex, which consists of CENPS, CENPX, FANCA, FANCB, FANCC, FANCE, FANCF, FANCG, FANCL, FANCM, FAAP24 and FAAP100. The FA core complex associates with Bloom syndrome (BLM) complex, which consists of at least BLM, DNA topoisomerase 3-alpha (TOP3A), RMI1/BLAP75, RPA1/RPA70 and RPA2/RPA32. The super complex between FA and BLM is called BRAFT.

The protein localises to the nucleus. It localises to the chromosome. It is found in the centromere. The protein resides in the kinetochore. Functionally, DNA-binding component of the Fanconi anemia (FA) core complex. Required for the normal activation of the FA pathway, leading to monoubiquitination of the FANCI-FANCD2 complex in response to DNA damage, cellular resistance to DNA cross-linking drugs, and prevention of chromosomal breakage. In complex with CENPS (MHF heterodimer), crucial cofactor for FANCM in both binding and ATP-dependent remodeling of DNA. Stabilizes FANCM. In complex with CENPS and FANCM (but not other FANC proteins), rapidly recruited to blocked forks and promotes gene conversion at blocked replication forks. In complex with CENPS, CENPT and CENPW (CENP-T-W-S-X heterotetramer), involved in the formation of a functional kinetochore outer plate, which is essential for kinetochore-microtubule attachment and faithful mitotic progression. As a component of MHF and CENP-T-W-S-X complexes, binds DNA and bends it to form a nucleosome-like structure. DNA-binding function is fulfilled in the presence of CENPS, with the following preference for DNA substates: Holliday junction &gt; double-stranded &gt; splay arm &gt; single-stranded. Does not bind DNA on its own. In Gallus gallus (Chicken), this protein is Centromere protein X (CENPX).